Consider the following 469-residue polypeptide: Chromosomal replication initiator protein DnaA (469 aa).

The segment at 1 to 71 (MKEFWQTCVS…EALAAEWYQR (71 aa)) is domain I, interacts with DnaA modulators. Residues 71–131 (RPVQVTFELP…DAANIVYERS (61 aa)) are domain II. Residues 132-348 (RLNTDLTFEN…GALRKVLAYA (217 aa)) form a domain III, AAA+ region region. Residues glycine 176, glycine 178, lysine 179, and threonine 180 each coordinate ATP. Residues 349-469 (RFHGRDVLTV…LHVLEQTLKG (121 aa)) are domain IV, binds dsDNA.

Belongs to the DnaA family. Oligomerizes as a right-handed, spiral filament on DNA at oriC.

Its subcellular location is the cytoplasm. Plays an essential role in the initiation and regulation of chromosomal replication. ATP-DnaA binds to the origin of replication (oriC) to initiate formation of the DNA replication initiation complex once per cell cycle. Binds the DnaA box (a 9 base pair repeat at the origin) and separates the double-stranded (ds)DNA. Forms a right-handed helical filament on oriC DNA; dsDNA binds to the exterior of the filament while single-stranded (ss)DNA is stabiized in the filament's interior. The ATP-DnaA-oriC complex binds and stabilizes one strand of the AT-rich DNA unwinding element (DUE), permitting loading of DNA polymerase. After initiation quickly degrades to an ADP-DnaA complex that is not apt for DNA replication. Binds acidic phospholipids. This Bordetella parapertussis (strain 12822 / ATCC BAA-587 / NCTC 13253) protein is Chromosomal replication initiator protein DnaA.